The primary structure comprises 363 residues: Spindle pole body component SPC42 (363 aa).

Residues 60-137 (EFINKAVQQN…ANSTFKEMRF (78 aa)) adopt a coiled-coil conformation. Residues 160–184 (PKHRAPDATGNPRTTNKVSNTSDQD) are disordered. Positions 170-182 (NPRTTNKVSNTSD) are enriched in polar residues. Serine 213, serine 217, serine 284, and serine 329 each carry phosphoserine. The stretch at 249–298 (DIMMYESAELKRVEEEIEELKRKILVRKKHDLRKLSLNNQLQELQSMMDG) forms a coiled coil. The tract at residues 310–363 (HNHATHRHSSQSSRDYSPSSDACLECSNDLYEKNRVKPENNMSETFATPTPNNR) is disordered. Over residues 319–329 (SQSSRDYSPSS) the composition is skewed to low complexity. Residues 349–363 (NNMSETFATPTPNNR) are compositionally biased toward polar residues.

This sequence belongs to the SPC42 family. As to quaternary structure, component of the SPC110 complex containing at least CMD1, SPC29, SPC42 and SCP110.

The protein localises to the nucleus. The protein resides in the cytoplasm. Its subcellular location is the cytoskeleton. It is found in the microtubule organizing center. It localises to the spindle pole body. Functionally, forms a polymeric layer at the periphery of the spindle pole body (SPB) central plaque which has an essential function during SPB duplication and may facilitate attachment of the SPB to the nuclear membrane. This Saccharomyces cerevisiae (strain ATCC 204508 / S288c) (Baker's yeast) protein is Spindle pole body component SPC42 (SPC42).